A 190-amino-acid chain; its full sequence is Adenine phosphoribosyltransferase (190 aa).

The protein belongs to the purine/pyrimidine phosphoribosyltransferase family. Homodimer.

The protein localises to the cytoplasm. It catalyses the reaction AMP + diphosphate = 5-phospho-alpha-D-ribose 1-diphosphate + adenine. It functions in the pathway purine metabolism; AMP biosynthesis via salvage pathway; AMP from adenine: step 1/1. Catalyzes a salvage reaction resulting in the formation of AMP, that is energically less costly than de novo synthesis. This is Adenine phosphoribosyltransferase from Cupriavidus taiwanensis (strain DSM 17343 / BCRC 17206 / CCUG 44338 / CIP 107171 / LMG 19424 / R1) (Ralstonia taiwanensis (strain LMG 19424)).